Consider the following 173-residue polypeptide: MIDSDGFRANVGIIICNRFGQVMWARRFGQHSWQYPQGGVDDGETPEEAMYRELYEEVGLRPEHVQILTSTRSWLRYRLPKRLIRQDSKPVCIGQKQKWFLLQLKSSESAINLNACGHPEFDDWRWVSYWYPVRQVVSFKRDVYRKVMKEFAPTALPFQSREHHSNNRRGRRR.

Residues 6 to 149 (GFRANVGIII…KRDVYRKVMK (144 aa)) form the Nudix hydrolase domain. The Nudix box motif lies at 38–59 (GGVDDGETPEEAMYRELYEEVG).

The protein belongs to the Nudix hydrolase family. RppH subfamily. A divalent metal cation is required as a cofactor.

Functionally, accelerates the degradation of transcripts by removing pyrophosphate from the 5'-end of triphosphorylated RNA, leading to a more labile monophosphorylated state that can stimulate subsequent ribonuclease cleavage. In Shewanella woodyi (strain ATCC 51908 / MS32), this protein is RNA pyrophosphohydrolase.